The sequence spans 269 residues: Tryptophan synthase alpha chain (269 aa).

Catalysis depends on proton acceptor residues Glu54 and Asp65.

The protein belongs to the TrpA family. Tetramer of two alpha and two beta chains.

It catalyses the reaction (1S,2R)-1-C-(indol-3-yl)glycerol 3-phosphate + L-serine = D-glyceraldehyde 3-phosphate + L-tryptophan + H2O. Its pathway is amino-acid biosynthesis; L-tryptophan biosynthesis; L-tryptophan from chorismate: step 5/5. The alpha subunit is responsible for the aldol cleavage of indoleglycerol phosphate to indole and glyceraldehyde 3-phosphate. This chain is Tryptophan synthase alpha chain, found in Synechococcus sp. (strain CC9902).